Here is a 159-residue protein sequence, read N- to C-terminus: NAD(P)H-quinone oxidoreductase subunit J, chloroplastic (159 aa).

Belongs to the complex I 30 kDa subunit family. As to quaternary structure, NDH is composed of at least 16 different subunits, 5 of which are encoded in the nucleus.

It is found in the plastid. The protein localises to the chloroplast thylakoid membrane. The catalysed reaction is a plastoquinone + NADH + (n+1) H(+)(in) = a plastoquinol + NAD(+) + n H(+)(out). It carries out the reaction a plastoquinone + NADPH + (n+1) H(+)(in) = a plastoquinol + NADP(+) + n H(+)(out). Functionally, NDH shuttles electrons from NAD(P)H:plastoquinone, via FMN and iron-sulfur (Fe-S) centers, to quinones in the photosynthetic chain and possibly in a chloroplast respiratory chain. The immediate electron acceptor for the enzyme in this species is believed to be plastoquinone. Couples the redox reaction to proton translocation, and thus conserves the redox energy in a proton gradient. The protein is NAD(P)H-quinone oxidoreductase subunit J, chloroplastic of Brachypodium distachyon (Purple false brome).